The following is a 936-amino-acid chain: Sine oculis-binding protein homolog A (936 aa).

Over residues methionine 1–lysine 14 the composition is skewed to basic and acidic residues. Disordered stretches follow at residues methionine 1–glycine 46 and alanine 108–leucine 151. The segment covering alanine 108–serine 144 has biased composition (polar residues). 2 FCS-type zinc fingers span residues glutamate 169 to alanine 207 and leucine 247 to asparagine 287. 6 disordered regions span residues leucine 311–glutamate 330, leucine 336–proline 424, serine 486–alanine 511, asparagine 574–glutamate 632, proline 697–serine 727, and aspartate 842–alanine 877. Residues glycine 349–serine 382 show a composition bias toward low complexity. Over residues serine 395–isoleucine 404 the composition is skewed to pro residues. Composition is skewed to polar residues over residues proline 617–glutamate 632, aspartate 708–threonine 717, and asparagine 850–threonine 859.

This sequence belongs to the SOBP family.

Functionally, implicated in development of the cochlea. This chain is Sine oculis-binding protein homolog A (sobpa), found in Danio rerio (Zebrafish).